We begin with the raw amino-acid sequence, 858 residues long: Translation initiation factor IF-2 (858 aa).

Residues 49 to 271 are disordered; it reads TTTVTHPKSQ…NKPAPVRKDK (223 aa). Over residues 80 to 226 the composition is skewed to low complexity; it reads NQQQSNSRHQ…RFGGSLNSNN (147 aa). Basic residues predominate over residues 239–256; that stretch reads NRRRNNRNNKSRNNKNQR. Residues 359–528 form the tr-type G domain; that stretch reads PRAPVVTVMG…LLQSEVLELT (170 aa). Residues 368–375 are G1; the sequence is GHVDHGKT. A GTP-binding site is contributed by 368–375; it reads GHVDHGKT. Residues 393 to 397 form a G2 region; that stretch reads GITQA. The interval 414–417 is G3; the sequence is DTPG. Residues 414–418 and 468–471 contribute to the GTP site; these read DTPGH and NKID. A G4 region spans residues 468–471; sequence NKID. Positions 504–506 are G5; the sequence is SAK.

This sequence belongs to the TRAFAC class translation factor GTPase superfamily. Classic translation factor GTPase family. IF-2 subfamily.

It is found in the cytoplasm. In terms of biological role, one of the essential components for the initiation of protein synthesis. Protects formylmethionyl-tRNA from spontaneous hydrolysis and promotes its binding to the 30S ribosomal subunits. Also involved in the hydrolysis of GTP during the formation of the 70S ribosomal complex. The chain is Translation initiation factor IF-2 from Lactiplantibacillus plantarum (strain ATCC BAA-793 / NCIMB 8826 / WCFS1) (Lactobacillus plantarum).